Here is a 1005-residue protein sequence, read N- to C-terminus: Negative regulator of pleiotropic drug resistance STB5 (1005 aa).

Residues 1-28 form a disordered region; that stretch reads MSGPDKGSDSGQTANDPKQKKARNGQME. The segment at residues 32-59 is a DNA-binding region (zn(2)-C6 fungal-type); it reads CARCRKLKKKCPRQLPECSNCLKAREPC. Disordered regions lie at residues 129–151, 666–693, and 763–831; these read GGEQ…SINR, KGKS…EDVK, and TKPT…SSLR. Residues 673 to 693 show a composition bias toward basic and acidic residues; it reads KRFEKSKESDSDRGVTEEDVK. The span at 763–773 shows a compositional bias: polar residues; the sequence is TKPTANIMNDQ. Positions 792–801 are enriched in basic and acidic residues; it reads EGPKSLKEGN.

Its subcellular location is the nucleus. Its function is as follows. Transcription factor that negatively regulates pleiotropic drug resistance genes, including the ABC transporter genes CDR1, PDH1, and YOR1. In Candida glabrata (strain ATCC 2001 / BCRC 20586 / JCM 3761 / NBRC 0622 / NRRL Y-65 / CBS 138) (Yeast), this protein is Negative regulator of pleiotropic drug resistance STB5.